The sequence spans 342 residues: Trans-enoyl reductase himH (342 aa).

46-49 lines the NADP(+) pocket; that stretch reads TDWK. 133 to 140 is a substrate binding site; the sequence is LSVSTAAS. NADP(+) contacts are provided by residues 168–171, 191–194, 255–256, and 329–330; these read SSSV, SQAN, VM, and VS.

It belongs to the zinc-containing alcohol dehydrogenase family. Monomer.

The protein operates within secondary metabolite biosynthesis. Functionally, trans-enoyl reductase; part of the him gene cluster that mediates the biosynthesis of himeic acid A, a ubiquitin-activating enzyme (E1) inhibitor. First, himA, together with the trans-enoyl reductase himH, catalyzes the formation of apolyketide chain, which is then condensed with leucine by the NRPS activity of himA. Dieckmann cyclization and release from himA gives a tetramic acid intermediate as the product of himA PKS-NRPS. HimG then catalyzes alpha-oxidation of the tetramic acid ring, with a subsequent rearrangement to yield apyrone intermediate. Two terminal methyl groups of polyketide and amide side chains are oxidized to carboxylic acids by himC cytochrome P450 monooxygenase to form himeic acid A. Himeic acid A is further converted to himeic acid B and C during culture growth. No gene responsible for pyrone to pyridone conversion was found in the him gene cluster and himeic acid A is non-enzymatically converted to himeic acid C by the incorporation of an ammonium nitrogen atom in a pH5 buffer, and to himeic acid B at a conversion ratio of 50% during incubation in MeOH for 5 days. In Aspergillus japonicus, this protein is Trans-enoyl reductase himH.